Consider the following 398-residue polypeptide: Dual-specificity RNA methyltransferase RlmN (398 aa).

The Proton acceptor role is filled by Glu119. The region spanning 125 to 364 (EADRATLCVS…TIVRKTRGDD (240 aa)) is the Radical SAM core domain. A disulfide bridge connects residues Cys132 and Cys369. Residues Cys139, Cys143, and Cys146 each contribute to the [4Fe-4S] cluster site. Residues 193-194 (GE), Ser225, 247-249 (SLH), and Asn326 each bind S-adenosyl-L-methionine. Cys369 (S-methylcysteine intermediate) is an active-site residue.

Belongs to the radical SAM superfamily. RlmN family. [4Fe-4S] cluster is required as a cofactor.

It localises to the cytoplasm. The enzyme catalyses adenosine(2503) in 23S rRNA + 2 reduced [2Fe-2S]-[ferredoxin] + 2 S-adenosyl-L-methionine = 2-methyladenosine(2503) in 23S rRNA + 5'-deoxyadenosine + L-methionine + 2 oxidized [2Fe-2S]-[ferredoxin] + S-adenosyl-L-homocysteine. It catalyses the reaction adenosine(37) in tRNA + 2 reduced [2Fe-2S]-[ferredoxin] + 2 S-adenosyl-L-methionine = 2-methyladenosine(37) in tRNA + 5'-deoxyadenosine + L-methionine + 2 oxidized [2Fe-2S]-[ferredoxin] + S-adenosyl-L-homocysteine. Its function is as follows. Specifically methylates position 2 of adenine 2503 in 23S rRNA and position 2 of adenine 37 in tRNAs. m2A2503 modification seems to play a crucial role in the proofreading step occurring at the peptidyl transferase center and thus would serve to optimize ribosomal fidelity. The chain is Dual-specificity RNA methyltransferase RlmN from Yersinia pseudotuberculosis serotype IB (strain PB1/+).